A 267-amino-acid polypeptide reads, in one-letter code: Glutamate 5-kinase (267 aa).

Lys-14 lines the ATP pocket. Substrate-binding residues include Ser-54, Asp-141, and Asn-157. Residues 177–178 (SD) and 219–225 (TGGMMSK) each bind ATP.

It belongs to the glutamate 5-kinase family.

The protein resides in the cytoplasm. The catalysed reaction is L-glutamate + ATP = L-glutamyl 5-phosphate + ADP. It participates in amino-acid biosynthesis; L-proline biosynthesis; L-glutamate 5-semialdehyde from L-glutamate: step 1/2. Its function is as follows. Catalyzes the transfer of a phosphate group to glutamate to form L-glutamate 5-phosphate. The protein is Glutamate 5-kinase of Streptococcus thermophilus.